A 254-amino-acid polypeptide reads, in one-letter code: Nodulation protein J (254 aa).

6 helical membrane-spanning segments follow: residues 25–45 (ASVLGSVIDPLIMLFGLGVGL), 60–80 (FLACGLILTSAMSASNYEMLY), 106–126 (LIGEVLWAAYEGVVAGTIVAV), 133–153 (YIPGWSVIYILPDILFVALIF), 169–189 (LFAFYQSIAIAPLVFLSGVIV), and 230–250 (LLLSLLYASVMVFISAKVICV). In terms of domain architecture, ABC transmembrane type-2 spans 25 to 251 (ASVLGSVIDP…FISAKVICVR (227 aa)).

Belongs to the ABC-2 integral membrane protein family. Lipooligosaccharide exporter (TC 3.A.1.102) subfamily. The complex is composed of two ATP-binding proteins (NodI) and two transmembrane proteins (NodJ).

It is found in the cell inner membrane. Part of the ABC transporter complex NodIJ involved in the export of the nodulation factors (Nod factors), the bacterial signal molecules that induce symbiosis and subsequent nodulation induction. Nod factors are LCO (lipo-chitin oligosaccharide), a modified beta-1,4-linked N-acetylglucosamine oligosaccharide. This subunit encodes the transporter. The polypeptide is Nodulation protein J (nodJ) (Azorhizobium caulinodans (strain ATCC 43989 / DSM 5975 / JCM 20966 / LMG 6465 / NBRC 14845 / NCIMB 13405 / ORS 571)).